Consider the following 327-residue polypeptide: Gibberellin 2-beta-dioxygenase 3 (327 aa).

A Fe2OG dioxygenase domain is found at 173–278; the sequence is GSDQVFRVNH…RVSFIYFGGP (106 aa). Tyr-183 is a 2-oxoglutarate binding site. Residues His-202, Asp-204, and His-259 each contribute to the Fe cation site. 2 residues coordinate 2-oxoglutarate: Arg-269 and Ser-271.

The protein belongs to the iron/ascorbate-dependent oxidoreductase family. GA2OX subfamily. Requires L-ascorbate as cofactor. Fe(2+) is required as a cofactor. In terms of tissue distribution, expressed in roots, shoot apex, leaf blades, leaf sheaths, stems and flowers.

It carries out the reaction gibberellin A1 + 2-oxoglutarate + O2 = gibberellin A8 + succinate + CO2. In terms of biological role, catalyzes the 2-beta-hydroxylation of several biologically active gibberellins, leading to the homeostatic regulation of their endogenous level. Catabolism of gibberellins (GAs) plays a central role in plant development. In vitro, converts GA1, GA20, and GA29 to the corresponding 2-beta-hydroxylated products GA8, GA29-catabolite, respectively. The sequence is that of Gibberellin 2-beta-dioxygenase 3 from Oryza sativa subsp. japonica (Rice).